Here is a 388-residue protein sequence, read N- to C-terminus: uncharacterized protein (388 aa).

The stretch at 68–96 (KVDRMSEEEERMAIATRKAKEVAKELSET) forms a coiled coil. The interval 162–388 (GSHPLVREFN…PPQQDWFDSV (227 aa)) is disordered. Basic and acidic residues-rich tracts occupy residues 166 to 176 (LVREFNGEKPP) and 196 to 208 (ATDKKTGSKQSDK). The segment covering 233–251 (GVKHQHAIRRDDRHRHGMR) has biased composition (basic residues). 2 stretches are compositionally biased toward low complexity: residues 265-279 (QQQQCPVQGQQSRGQ) and 293-346 (QRRP…QRPA).

This is an uncharacterized protein from Frog virus 3 (isolate Goorha) (FV-3).